A 236-amino-acid chain; its full sequence is Small ribosomal subunit protein uS3 (236 aa).

Residues 39 to 107 form the KH type-2 domain; the sequence is IREFLTEELK…DTSLNIVEVR (69 aa). Residues 214–236 are disordered; it reads ASERRAVEGDNQGSSSNRRRENA.

The protein belongs to the universal ribosomal protein uS3 family. As to quaternary structure, part of the 30S ribosomal subunit. Forms a tight complex with proteins S10 and S14.

Binds the lower part of the 30S subunit head. Binds mRNA in the 70S ribosome, positioning it for translation. The sequence is that of Small ribosomal subunit protein uS3 from Brucella anthropi (strain ATCC 49188 / DSM 6882 / CCUG 24695 / JCM 21032 / LMG 3331 / NBRC 15819 / NCTC 12168 / Alc 37) (Ochrobactrum anthropi).